The following is a 603-amino-acid chain: Isocitrate dehydrogenase kinase/phosphatase (603 aa).

Residues 327-333 (APGIKGL) and K348 each bind ATP. Residue D383 is part of the active site.

Belongs to the AceK family.

The protein localises to the cytoplasm. The enzyme catalyses L-seryl-[isocitrate dehydrogenase] + ATP = O-phospho-L-seryl-[isocitrate dehydrogenase] + ADP + H(+). Bifunctional enzyme which can phosphorylate or dephosphorylate isocitrate dehydrogenase (IDH) on a specific serine residue. This is a regulatory mechanism which enables bacteria to bypass the Krebs cycle via the glyoxylate shunt in response to the source of carbon. When bacteria are grown on glucose, IDH is fully active and unphosphorylated, but when grown on acetate or ethanol, the activity of IDH declines drastically concomitant with its phosphorylation. In Burkholderia mallei (strain ATCC 23344), this protein is Isocitrate dehydrogenase kinase/phosphatase.